We begin with the raw amino-acid sequence, 653 residues long: Sodium-dependent phosphate transporter 2 (653 aa).

The Extracellular segment spans residues 1-5 (MAIDG). A helical membrane pass occupies residues 6–26 (YLWMVILGFIIAFILAFSVGA). The Cytoplasmic portion of the chain corresponds to 27–46 (NDVANSFGTAVGSGVVTLRQ). A helical membrane pass occupies residues 47–67 (ACILASIFETTGSVLLGAKVG). Residues 68–86 (ETIRKGIIDVNLYNETVET) are Extracellular-facing. N-linked (GlcNAc...) asparagine glycosylation is present at N81. Residues 87–107 (LMAGEVSAMVGSAVWQLIASF) form a helical membrane-spanning segment. The Cytoplasmic portion of the chain corresponds to 108–109 (LR). The helical transmembrane segment at 110-130 (LPISGTHCIVGSTIGFSLVAI) threads the bilayer. Residues 131–142 (GTQGVQWMELVK) are Extracellular-facing. The chain crosses the membrane as a helical span at residues 143 to 163 (IVASWFISPLLSGFMSGVLFI). Over 164–190 (LIRIFILKKEDPVPNGLRALPVFYAAT) the chain is Cytoplasmic. A helical membrane pass occupies residues 191–211 (IAINVFSIMYTGAPVLGLVLP). At 212–213 (IW) the chain is on the extracellular side. A helical transmembrane segment spans residues 214–234 (AIALISFGVALLFALFVWLFV). Residues 235–483 (CPWMRRKIAG…EEKEEKDTAE (249 aa)) are Cytoplasmic-facing. 4 positions are modified to phosphoserine: S253, S256, S259, and S268. Residues 275–311 (PGAKANDDSTVPLTGSAGEPSGTSEGTSVGNHPRASY) form a disordered region. Over residues 295-304 (SGTSEGTSVG) the composition is skewed to polar residues. S316 and S385 each carry phosphoserine. Residues 459–478 (SELTDPDQPRDDPAEEEKEE) form a disordered region. Residues 484-504 (VHLLFHFLQVLTACFGSFAHG) form a helical membrane-spanning segment. Over 505 to 531 (GNDVSNAIGPLVALWLIYEQGAVLQEA) the chain is Extracellular. Residues 532–552 (VTPVWLLFYGGVGICTGLWVW) traverse the membrane as a helical segment. Topologically, residues 553 to 572 (GRRVIQTMGKDLTPITPSSG) are cytoplasmic. A helical membrane pass occupies residues 573–587 (FTIELASAFTVVIAS). At 588-594 (NVGLPVS) the chain is on the extracellular side. Residues 595–610 (TTHCKVGSVVAVGWIR) traverse the membrane as a helical segment. At 611–622 (SRKAVDWRLFRN) the chain is on the cytoplasmic side. A helical transmembrane segment spans residues 623-643 (IFVAWFVTVPVAGLFSAAIMA). Residues 644–653 (LLMYGILPYV) lie on the Extracellular side of the membrane.

This sequence belongs to the inorganic phosphate transporter (PiT) (TC 2.A.20) family. As to quaternary structure, homodimer.

The protein localises to the cell membrane. It is found in the apical cell membrane. It catalyses the reaction 2 Na(+)(out) + phosphate(out) = 2 Na(+)(in) + phosphate(in). Its function is as follows. Sodium-phosphate symporter which preferentially transports the monovalent form of phosphate with a stoichiometry of two sodium ions per phosphate ion. Plays a critical role in the determination of bone quality and strength by providing phosphate for bone mineralization. Required to maintain normal cerebrospinal fluid phosphate levels. Mediates phosphate-induced calcification of vascular smooth muscle cells (VCMCs) and can functionally compensate for loss of SLC20A1 in VCMCs. In terms of biological role, (Microbial infection) Functions as a retroviral receptor for feline leukemia virus subgroup B (FeLV-B). The chain is Sodium-dependent phosphate transporter 2 (SLC20A2) from Felis catus (Cat).